The sequence spans 104 residues: uncharacterized protein (104 aa).

The disordered stretch occupies residues 62-92; the sequence is SSPAASSHPRKRGKEKKERTPTERLAAPARK.

This is an uncharacterized protein from Human adenovirus B serotype 7 (HAdV-7).